Here is a 531-residue protein sequence, read N- to C-terminus: Apolipoprotein N-acyltransferase (531 aa).

7 consecutive transmembrane segments (helical) span residues 8-28, 34-54, 74-94, 105-125, 128-148, 178-198, and 206-226; these read IILLSGASRAFVGFLAGLLAM, FGIFAAAFISFPMLVWLIDGV, WSFGFGYFLGGLWWLGNAFLV, LAVVGLPAVLALFYALAVLVA, LWSDGVGRIAALAVGFGVAEW, VLNVATINMLAVFVFAAPALI, and VGLAVAAALFAAHIGYGYYRL. The region spanning 243 to 493 is the CN hydrolase domain; the sequence is VQPVIDQAKK…KGVTDAILPG (251 aa). Glu-287 serves as the catalytic Proton acceptor. Lys-351 is an active-site residue. Cys-405 serves as the catalytic Nucleophile. The helical transmembrane segment at 501 to 521 threads the bilayer; sequence SMLRGRIFWFTGVFLLLVAAI.

The protein belongs to the CN hydrolase family. Apolipoprotein N-acyltransferase subfamily.

Its subcellular location is the cell inner membrane. It carries out the reaction N-terminal S-1,2-diacyl-sn-glyceryl-L-cysteinyl-[lipoprotein] + a glycerophospholipid = N-acyl-S-1,2-diacyl-sn-glyceryl-L-cysteinyl-[lipoprotein] + a 2-acyl-sn-glycero-3-phospholipid + H(+). Its pathway is protein modification; lipoprotein biosynthesis (N-acyl transfer). Its function is as follows. Catalyzes the phospholipid dependent N-acylation of the N-terminal cysteine of apolipoprotein, the last step in lipoprotein maturation. This chain is Apolipoprotein N-acyltransferase, found in Sinorhizobium fredii (strain NBRC 101917 / NGR234).